The chain runs to 597 residues: Elongation factor 4 (597 aa).

Positions 2–184 constitute a tr-type G domain; sequence KNIRNFSIIA…EIVAKIPAPT (183 aa). GTP-binding positions include 14–19 and 131–134; these read DHGKST and NKID.

The protein belongs to the TRAFAC class translation factor GTPase superfamily. Classic translation factor GTPase family. LepA subfamily.

The protein resides in the cell inner membrane. The enzyme catalyses GTP + H2O = GDP + phosphate + H(+). Functionally, required for accurate and efficient protein synthesis under certain stress conditions. May act as a fidelity factor of the translation reaction, by catalyzing a one-codon backward translocation of tRNAs on improperly translocated ribosomes. Back-translocation proceeds from a post-translocation (POST) complex to a pre-translocation (PRE) complex, thus giving elongation factor G a second chance to translocate the tRNAs correctly. Binds to ribosomes in a GTP-dependent manner. This Neisseria gonorrhoeae (strain ATCC 700825 / FA 1090) protein is Elongation factor 4.